Reading from the N-terminus, the 931-residue chain is Protein unc-45 homolog B (931 aa).

3 TPR repeats span residues Ala6 to Lys39, Ala43 to Asp76, and Ile77 to Asn110. 3 ARM repeats span residues Glu169 to Ser208, Gln211 to Asp250, and Asp751 to Leu790.

As to quaternary structure, interacts with HSP90 in an ATP-independent manner. Interacts with UBE4B; the interaction may target UNC45B for proteasomal degradation. In terms of tissue distribution, expressed in eye lens tissues. Expressed in muscle (at protein level).

The protein resides in the cytoplasm. It is found in the myofibril. The protein localises to the sarcomere. Its subcellular location is the z line. It localises to the a band. The protein resides in the perinuclear region. It is found in the cytosol. Its function is as follows. Acts as a co-chaperone for HSP90 and is required for proper folding of the myosin motor domain. Plays a role in sarcomere formation during muscle cell development. Is necessary for normal early lens development. The polypeptide is Protein unc-45 homolog B (Homo sapiens (Human)).